Reading from the N-terminus, the 209-residue chain is Small ribosomal subunit protein uS4 (209 aa).

Residues 22–45 are disordered; sequence RGRNPLLRKPNPPGQHGMQRKKKS. Residues 93–154 enclose the S4 RNA-binding domain; that stretch reads CRLDNIVYRL…KSKRLAIVTE (62 aa).

The protein belongs to the universal ribosomal protein uS4 family. Part of the 30S ribosomal subunit. Contacts protein S5. The interaction surface between S4 and S5 is involved in control of translational fidelity.

One of the primary rRNA binding proteins, it binds directly to 16S rRNA where it nucleates assembly of the body of the 30S subunit. In terms of biological role, with S5 and S12 plays an important role in translational accuracy. This Chlamydia trachomatis serovar A (strain ATCC VR-571B / DSM 19440 / HAR-13) protein is Small ribosomal subunit protein uS4.